The chain runs to 302 residues: Elongation factor Ts (302 aa).

Residues 80 to 83 (TDFV) form an involved in Mg(2+) ion dislocation from EF-Tu region.

Belongs to the EF-Ts family.

Its subcellular location is the cytoplasm. Its function is as follows. Associates with the EF-Tu.GDP complex and induces the exchange of GDP to GTP. It remains bound to the aminoacyl-tRNA.EF-Tu.GTP complex up to the GTP hydrolysis stage on the ribosome. This Methylibium petroleiphilum (strain ATCC BAA-1232 / LMG 22953 / PM1) protein is Elongation factor Ts.